The chain runs to 110 residues: Protein YcgL (110 aa).

The YcgL domain maps to 14-98 (MFCVIYRSSK…PPEDLLKQHL (85 aa)). Positions 88 to 110 (PPPEDLLKQHLSSVGQNTSHADR) are disordered. The span at 97-110 (HLSSVGQNTSHADR) shows a compositional bias: polar residues.

The polypeptide is Protein YcgL (Salmonella schwarzengrund (strain CVM19633)).